The chain runs to 68 residues: Beta-defensin 1 (68 aa).

The first 21 residues, 1–21 (MRTSYLLLFTLCLLLSEMASG), serve as a signal peptide directing secretion. The propeptide occupies 22 to 32 (GNFLTGLGHRS). 3 disulfide bridges follow: Cys37/Cys66, Cys44/Cys59, and Cys49/Cys67.

It belongs to the beta-defensin family. As to quaternary structure, monomer. Homodimer.

Its subcellular location is the secreted. It localises to the membrane. In terms of biological role, has bactericidal activity. May act as a ligand for C-C chemokine receptor CCR6. Positively regulates the sperm motility and bactericidal activity in a CCR6-dependent manner. Binds to CCR6 and triggers Ca2+ mobilization in the sperm which is important for its motility. This chain is Beta-defensin 1 (DEFB1), found in Pan troglodytes (Chimpanzee).